The following is a 660-amino-acid chain: Acetyl-coenzyme A synthetase (660 aa).

CoA is bound by residues 197 to 200 and T317; that span reads RGGK. Residues 397–399, 421–426, D512, and R528 contribute to the ATP site; these read GEP and DTWWQT. S536 lines the CoA pocket. ATP is bound at residue R539. Positions 550 and 555 each coordinate Mg(2+). K625 is subject to N6-acetyllysine.

This sequence belongs to the ATP-dependent AMP-binding enzyme family. The cofactor is Mg(2+). Post-translationally, acetylated. Deacetylation by the SIR2-homolog deacetylase activates the enzyme.

It catalyses the reaction acetate + ATP + CoA = acetyl-CoA + AMP + diphosphate. Functionally, catalyzes the conversion of acetate into acetyl-CoA (AcCoA), an essential intermediate at the junction of anabolic and catabolic pathways. AcsA undergoes a two-step reaction. In the first half reaction, AcsA combines acetate with ATP to form acetyl-adenylate (AcAMP) intermediate. In the second half reaction, it can then transfer the acetyl group from AcAMP to the sulfhydryl group of CoA, forming the product AcCoA. In Paraburkholderia phymatum (strain DSM 17167 / CIP 108236 / LMG 21445 / STM815) (Burkholderia phymatum), this protein is Acetyl-coenzyme A synthetase.